We begin with the raw amino-acid sequence, 348 residues long: MADTFFFTPSRRLTVANVAELTGAKLLNPEFSNTVINTLSSLESAGKGSLVFVEHRKFSDALVGSSAVAVFCTNEIVFKVPESMAILVTSTPQRDFAQIGRILFPDSVKPMPWFGQREISPHAHIHPSAKLAGDVCIEAGAVIGRNVEIGSGSLIASTAVIGENCRIGCDCYIAPKVTVQYSLIGDKVHLYPGACIGQDGFGYIGGASGIEKVPQLGRVIIEDGVEIGANTTIDRGTFEDTIIGEGSKIDNLVQIAHNVKIGRYCLIAAQCGIAGSTSIGDMSQLGGSVGVADHIVIGKYVQIAAGSGVMNDIPDGEKWGGSPARPFKQWFREVAALRSIGKVKKEKR.

The active-site Proton acceptor is the histidine 257.

This sequence belongs to the transferase hexapeptide repeat family. LpxD subfamily. Homotrimer.

The catalysed reaction is a UDP-3-O-[(3R)-3-hydroxyacyl]-alpha-D-glucosamine + a (3R)-hydroxyacyl-[ACP] = a UDP-2-N,3-O-bis[(3R)-3-hydroxyacyl]-alpha-D-glucosamine + holo-[ACP] + H(+). The protein operates within bacterial outer membrane biogenesis; LPS lipid A biosynthesis. Its function is as follows. Catalyzes the N-acylation of UDP-3-O-acylglucosamine using 3-hydroxyacyl-ACP as the acyl donor. Is involved in the biosynthesis of lipid A, a phosphorylated glycolipid that anchors the lipopolysaccharide to the outer membrane of the cell. The protein is UDP-3-O-acylglucosamine N-acyltransferase of Bartonella henselae (strain ATCC 49882 / DSM 28221 / CCUG 30454 / Houston 1) (Rochalimaea henselae).